An 811-amino-acid chain; its full sequence is Potassium transporter 27 (811 aa).

The Cytoplasmic portion of the chain corresponds to 1-64 (MGDDVLGRGS…QEESWARTLK (64 aa)). Residues 65–85 (LAFQCVGILYGDIGTSPLFVY) form a helical membrane-spanning segment. Residues 86–102 (SSTFKDGVRHPDDLLGA) lie on the Extracellular side of the membrane. A helical transmembrane segment spans residues 103–123 (LSLIIYSFALFTIVKYVFIAL). Topologically, residues 124-188 (RANDDGDGGT…ELLETNRAVK (65 aa)) are cytoplasmic. Residues 189-209 (IWLFLLTILATAMVISDAVLT) traverse the membrane as a helical segment. Over 210–226 (PAISVLSAVGGLKEKAP) the chain is Extracellular. The chain crosses the membrane as a helical span at residues 227–247 (NLTTDEIVWITVATLVVLFAI). Residues 248-254 (QRFGTDK) are Cytoplasmic-facing. The chain crosses the membrane as a helical span at residues 255–275 (IGYLFAPIILLWLLLIGCVGI). Over 276-310 (YNTIKFDTGVLRAFNLKYIIDYFRRNKKDGWISLS) the chain is Extracellular. Residues 311–331 (GILLCFTGTEALFSDLGYFSI) traverse the membrane as a helical segment. Residues 332–335 (RSIQ) are Cytoplasmic-facing. A helical transmembrane segment spans residues 336–356 (LSFSFGLVPSVLLAYIGQAAY). Residues 357–375 (LREHPEHIANTFYRSTPNV) are Extracellular-facing. The helical transmembrane segment at 376–396 (MFWPTFILAVAASIIGSQAMI) threads the bilayer. At 397–434 (SCAFATISHLQTLNCFPRVKILHTSRQYSGQLYIPEVN) the chain is on the cytoplasmic side. Residues 435–455 (FLLCVGACLVTIGFKTTVIIG) form a helical membrane-spanning segment. At 456–459 (EAHA) the chain is on the extracellular side. The chain crosses the membrane as a helical span at residues 460–480 (ICVVFVMIITTLLLTIVMLLV). Over 481–482 (WK) the chain is Cytoplasmic. The helical transmembrane segment at 483 to 503 (VSIWYVALFFIVFMSSESIYL) threads the bilayer. At 504–515 (SAVLYQFVHGEY) the chain is on the extracellular side. The chain crosses the membrane as a helical span at residues 516 to 536 (VPVAMSVFLMIVMTVWHYVHV). Residues 537 to 811 (KRYEFELEHT…VLKVGIAYEI (275 aa)) are Cytoplasmic-facing.

This sequence belongs to the HAK/KUP transporter (TC 2.A.72.3) family.

It localises to the membrane. Functionally, high-affinity potassium transporter. In Oryza sativa subsp. japonica (Rice), this protein is Potassium transporter 27 (HAK27).